The sequence spans 305 residues: Probable 4-deoxy-4-formamido-L-arabinose-phosphoundecaprenol deformylase ArnD (305 aa).

The 256-residue stretch at 7–262 (TKVGLRIDVD…QAKENNIEFV (256 aa)) folds into the NodB homology domain.

The protein belongs to the polysaccharide deacetylase family. ArnD deformylase subfamily.

It carries out the reaction 4-deoxy-4-formamido-alpha-L-arabinopyranosyl di-trans,octa-cis-undecaprenyl phosphate + H2O = 4-amino-4-deoxy-alpha-L-arabinopyranosyl di-trans,octa-cis-undecaprenyl phosphate + formate. It participates in glycolipid biosynthesis; 4-amino-4-deoxy-alpha-L-arabinose undecaprenyl phosphate biosynthesis; 4-amino-4-deoxy-alpha-L-arabinose undecaprenyl phosphate from UDP-4-deoxy-4-formamido-beta-L-arabinose and undecaprenyl phosphate: step 2/2. The protein operates within bacterial outer membrane biogenesis; lipopolysaccharide biosynthesis. Functionally, catalyzes the deformylation of 4-deoxy-4-formamido-L-arabinose-phosphoundecaprenol to 4-amino-4-deoxy-L-arabinose-phosphoundecaprenol. The modified arabinose is attached to lipid A and is required for resistance to polymyxin and cationic antimicrobial peptides. This chain is Probable 4-deoxy-4-formamido-L-arabinose-phosphoundecaprenol deformylase ArnD, found in Shewanella sediminis (strain HAW-EB3).